The following is an 878-amino-acid chain: Alanine--tRNA ligase (878 aa).

Residues histidine 566, histidine 570, cysteine 668, and histidine 672 each coordinate Zn(2+).

The protein belongs to the class-II aminoacyl-tRNA synthetase family. The cofactor is Zn(2+).

It is found in the cytoplasm. It carries out the reaction tRNA(Ala) + L-alanine + ATP = L-alanyl-tRNA(Ala) + AMP + diphosphate. Its function is as follows. Catalyzes the attachment of alanine to tRNA(Ala) in a two-step reaction: alanine is first activated by ATP to form Ala-AMP and then transferred to the acceptor end of tRNA(Ala). Also edits incorrectly charged Ser-tRNA(Ala) and Gly-tRNA(Ala) via its editing domain. This is Alanine--tRNA ligase from Bacillus velezensis (strain DSM 23117 / BGSC 10A6 / LMG 26770 / FZB42) (Bacillus amyloliquefaciens subsp. plantarum).